A 238-amino-acid chain; its full sequence is Probable transcriptional regulatory protein Sde_1551 (238 aa).

This sequence belongs to the TACO1 family.

The protein localises to the cytoplasm. In Saccharophagus degradans (strain 2-40 / ATCC 43961 / DSM 17024), this protein is Probable transcriptional regulatory protein Sde_1551.